The chain runs to 223 residues: MNIAKLIDHTILKANTTKEDVMKVIEEAKEYKFASVCINPTWVKLAAEELAGHDVDVCTVIGFPLGASTTETKAFETKDAIAKGATEVDMVINVGALKDGDDELVEKDIYEVVQAAKGKALVKVIIETCLLTDEEKVRACELSVKAGADFVKTSTGFSTGGATAEDIALMRKTVGPNVGVKASGGVRTREDAEKMVAAGASRVGASASVAIVLNDAKGATDNY.

Aspartate 89 (proton donor/acceptor) is an active-site residue. Residue lysine 152 is the Schiff-base intermediate with acetaldehyde of the active site. Lysine 181 functions as the Proton donor/acceptor in the catalytic mechanism.

Belongs to the DeoC/FbaB aldolase family. DeoC type 1 subfamily.

It localises to the cytoplasm. It catalyses the reaction 2-deoxy-D-ribose 5-phosphate = D-glyceraldehyde 3-phosphate + acetaldehyde. It functions in the pathway carbohydrate degradation; 2-deoxy-D-ribose 1-phosphate degradation; D-glyceraldehyde 3-phosphate and acetaldehyde from 2-deoxy-alpha-D-ribose 1-phosphate: step 2/2. Catalyzes a reversible aldol reaction between acetaldehyde and D-glyceraldehyde 3-phosphate to generate 2-deoxy-D-ribose 5-phosphate. The chain is Deoxyribose-phosphate aldolase from Bacillus cereus (strain ATCC 10987 / NRS 248).